The following is a 301-amino-acid chain: Golgi to ER traffic protein 2 (301 aa).

Over 1 to 167 (MSEPVVDTAE…LEYNTYNQKL (167 aa)) the chain is Cytoplasmic. Over residues 42–55 (SQGSSVKTSGVKSV) the composition is skewed to low complexity. Residues 42–93 (SQGSSVKTSGVKSVLDQEKEATSSHDDDPEIQDITEITTPPPRTPPIGEDAP) are disordered. Residues 56–67 (LDQEKEATSSHD) are compositionally biased toward basic and acidic residues. A helical membrane pass occupies residues 168 to 188 (WKFRFLLVRVLVTLFNFFYHY). At 189-214 (TSISDFHASNYAYVRDLSSEEYPVRD) the chain is on the lumenal side. A helical transmembrane segment spans residues 215–234 (FFTWFATSEVVLVAAYYSVF). The Cytoplasmic segment spans residues 235-278 (HSLGLFHAANQNSIILKVMSMGSMILPQLESYKPLVARFLGYYE). The chain crosses the membrane as a helical span at residues 279–299 (LLGIVLGGLSLVIVLFGLLSF). Topologically, residues 300–301 (AN) are lumenal.

This sequence belongs to the GET2 family. Component of the Golgi to ER traffic (GET) complex, which is composed of GET1, GET2 and GET3. Within the complex, GET1 and GET2 form a heterotetramer which is stabilized by phosphatidylinositol binding and which binds to the GET3 homodimer.

The protein resides in the endoplasmic reticulum membrane. It is found in the golgi apparatus membrane. Functionally, required for the post-translational delivery of tail-anchored (TA) proteins to the endoplasmic reticulum. Together with GET1, acts as a membrane receptor for soluble GET3, which recognizes and selectively binds the transmembrane domain of TA proteins in the cytosol. The GET complex cooperates with the HDEL receptor ERD2 to mediate the ATP-dependent retrieval of resident ER proteins that contain a C-terminal H-D-E-L retention signal from the Golgi to the ER. The sequence is that of Golgi to ER traffic protein 2 from Candida dubliniensis (strain CD36 / ATCC MYA-646 / CBS 7987 / NCPF 3949 / NRRL Y-17841) (Yeast).